The primary structure comprises 1040 residues: Isoleucine--tRNA ligase (1040 aa).

The 'HIGH' region motif lies at 47–57 (PYCSGSIHLGT). Residues 605–609 (KMSKS) carry the 'KMSKS' region motif. Lysine 608 is a binding site for ATP.

The protein belongs to the class-I aminoacyl-tRNA synthetase family. IleS type 2 subfamily. In terms of assembly, monomer. Requires Zn(2+) as cofactor.

The protein resides in the cytoplasm. It carries out the reaction tRNA(Ile) + L-isoleucine + ATP = L-isoleucyl-tRNA(Ile) + AMP + diphosphate. Its function is as follows. Catalyzes the attachment of isoleucine to tRNA(Ile). As IleRS can inadvertently accommodate and process structurally similar amino acids such as valine, to avoid such errors it has two additional distinct tRNA(Ile)-dependent editing activities. One activity is designated as 'pretransfer' editing and involves the hydrolysis of activated Val-AMP. The other activity is designated 'posttransfer' editing and involves deacylation of mischarged Val-tRNA(Ile). This is Isoleucine--tRNA ligase from Methanococcus aeolicus (strain ATCC BAA-1280 / DSM 17508 / OCM 812 / Nankai-3).